Consider the following 305-residue polypeptide: Glutaminase (305 aa).

7 residues coordinate substrate: Ser61, Asn113, Glu158, Asn165, Tyr189, Tyr241, and Val259.

It belongs to the glutaminase family. As to quaternary structure, homotetramer.

It catalyses the reaction L-glutamine + H2O = L-glutamate + NH4(+). The polypeptide is Glutaminase (Clostridium botulinum (strain ATCC 19397 / Type A)).